A 405-amino-acid polypeptide reads, in one-letter code: Tyrosine--tRNA ligase (405 aa).

Tyrosine 35 provides a ligand contact to L-tyrosine. The 'HIGH' region signature appears at 40 to 49 (TTSSSLHIGH). The L-tyrosine site is built by tyrosine 166 and glutamine 170. Residues 226 to 230 (KMGKS) carry the 'KMSKS' region motif. Lysine 229 provides a ligand contact to ATP. One can recognise an S4 RNA-binding domain in the interval 340–404 (ILLIDLMLDS…VGKKKFLRIV (65 aa)).

It belongs to the class-I aminoacyl-tRNA synthetase family. TyrS type 1 subfamily. As to quaternary structure, homodimer.

Its subcellular location is the cytoplasm. It carries out the reaction tRNA(Tyr) + L-tyrosine + ATP = L-tyrosyl-tRNA(Tyr) + AMP + diphosphate + H(+). Catalyzes the attachment of tyrosine to tRNA(Tyr) in a two-step reaction: tyrosine is first activated by ATP to form Tyr-AMP and then transferred to the acceptor end of tRNA(Tyr). This chain is Tyrosine--tRNA ligase, found in Borrelia garinii subsp. bavariensis (strain ATCC BAA-2496 / DSM 23469 / PBi) (Borreliella bavariensis).